A 696-amino-acid polypeptide reads, in one-letter code: DNA-directed RNA polymerase subunit beta' (696 aa).

Residues Cys-70, Cys-72, Cys-85, and Cys-88 each coordinate Zn(2+). Mg(2+)-binding residues include Asp-540, Asp-542, and Asp-544.

This sequence belongs to the RNA polymerase beta' chain family. RpoC1 subfamily. In terms of assembly, in plastids the minimal PEP RNA polymerase catalytic core is composed of four subunits: alpha, beta, beta', and beta''. When a (nuclear-encoded) sigma factor is associated with the core the holoenzyme is formed, which can initiate transcription. Requires Mg(2+) as cofactor. Zn(2+) serves as cofactor.

The protein resides in the plastid. Its subcellular location is the chloroplast. It carries out the reaction RNA(n) + a ribonucleoside 5'-triphosphate = RNA(n+1) + diphosphate. Its function is as follows. DNA-dependent RNA polymerase catalyzes the transcription of DNA into RNA using the four ribonucleoside triphosphates as substrates. This Phaeodactylum tricornutum (strain CCAP 1055/1) protein is DNA-directed RNA polymerase subunit beta'.